The chain runs to 56 residues: Serine protease inhibitor Kazal-type 1 (56 aa).

The region spanning Leu-3–Cys-56 is the Kazal-like domain. Cystine bridges form between Cys-9-Cys-38, Cys-16-Cys-35, and Cys-24-Cys-56.

The protein localises to the secreted. Functionally, serine protease inhibitor which exhibits anti-trypsin activity. In the pancreas, protects against trypsin-catalyzed premature activation of zymogens. In the male reproductive tract, binds to sperm heads where it modulates sperm capacitance by inhibiting calcium uptake and nitrogen oxide (NO) production. This is Serine protease inhibitor Kazal-type 1 (SPINK1) from Equus caballus (Horse).